The sequence spans 91 residues: Large ribosomal subunit protein eL31 (91 aa).

The protein belongs to the eukaryotic ribosomal protein eL31 family.

In Pyrobaculum neutrophilum (strain DSM 2338 / JCM 9278 / NBRC 100436 / V24Sta) (Thermoproteus neutrophilus), this protein is Large ribosomal subunit protein eL31.